A 394-amino-acid polypeptide reads, in one-letter code: Aspergillopepsin-1 (394 aa).

An N-terminal signal peptide occupies residues 1-20 (MVVFSKTAALVLGLSSAVSA). Residues 21 to 69 (APAPTRKGFTINQIARPANKTRTINLPGMYARSLAKFGGTVPQSVKEAA) constitute a propeptide, activation peptide. Residues 85–391 (YLTPVTVGKS…NSEGPKLGFA (307 aa)) enclose the Peptidase A1 domain. Residues aspartate 101 and aspartate 283 contribute to the active site. A disulfide bridge links cysteine 319 with cysteine 354.

It belongs to the peptidase A1 family. As to quaternary structure, monomer.

It localises to the secreted. It catalyses the reaction Hydrolysis of proteins with broad specificity. Generally favors hydrophobic residues in P1 and P1', but also accepts Lys in P1, which leads to activation of trypsinogen. Does not clot milk.. Functionally, secreted aspartic endopeptidase that allows assimilation of proteinaceous substrates. The scissile peptide bond is attacked by a nucleophilic water molecule activated by two aspartic residues in the active site. Shows a broad primary substrate specificity. Favors hydrophobic residues at the P1 and P1' positions, but also accepts a lysine residue in the P1 position, leading to the activation of trypsinogen and chymotrypsinogen A. The protein is Aspergillopepsin-1 (pepA) of Aspergillus niger (strain ATCC MYA-4892 / CBS 513.88 / FGSC A1513).